A 90-amino-acid chain; its full sequence is Barrier-to-autointegration factor (90 aa).

The protein belongs to the BAF family. As to quaternary structure, may interact with MAD1.

It localises to the nucleus. Its subcellular location is the cytoplasm. It is found in the chromosome. Functionally, plays fundamental roles in nuclear assembly, chromatin organization, gene expression and gonad development. May potently compress chromatin structure and be involved in membrane recruitment and chromatin decondensation during nuclear assembly. Functions are required in both M phase and interphase of the cell cycle. This Drosophila melanogaster (Fruit fly) protein is Barrier-to-autointegration factor (baf).